Reading from the N-terminus, the 59-residue chain is Putative potassium channel toxin Ts25 (59 aa).

An N-terminal signal peptide occupies residues 1–22 (MKAFYGILIIFILISMIHLSQQ). Disulfide bonds link C29–C50, C35–C55, and C39–C57.

The protein belongs to the short scorpion toxin superfamily. Potassium channel inhibitor family. Alpha-KTx 04 subfamily. In terms of tissue distribution, expressed by the venom gland.

Its subcellular location is the secreted. In terms of biological role, potently blocks Kv1.1/KCNA1 (85%), Kv1.2/KCNA2 (91%), Kv1.3/KCNA3 (89%), Kv1.6/KCNA6 (94%), and Shaker (97%). The sequence is that of Putative potassium channel toxin Ts25 from Tityus serrulatus (Brazilian scorpion).